The following is a 395-amino-acid chain: S-adenosylmethionine synthase (395 aa).

H15 is a binding site for ATP. D17 contributes to the Mg(2+) binding site. Position 43 (E43) interacts with K(+). L-methionine is bound by residues E56 and Q99. Residues 99–109 (QSPEIAQGVDR) are flexible loop. ATP contacts are provided by residues 164 to 166 (DAK), 230 to 231 (RF), D239, 245 to 246 (RK), A262, and K266. D239 serves as a coordination point for L-methionine. Residue K270 coordinates L-methionine.

It belongs to the AdoMet synthase family. In terms of assembly, homotetramer; dimer of dimers. Mg(2+) serves as cofactor. Requires K(+) as cofactor.

The protein localises to the cytoplasm. It catalyses the reaction L-methionine + ATP + H2O = S-adenosyl-L-methionine + phosphate + diphosphate. The protein operates within amino-acid biosynthesis; S-adenosyl-L-methionine biosynthesis; S-adenosyl-L-methionine from L-methionine: step 1/1. Catalyzes the formation of S-adenosylmethionine (AdoMet) from methionine and ATP. The overall synthetic reaction is composed of two sequential steps, AdoMet formation and the subsequent tripolyphosphate hydrolysis which occurs prior to release of AdoMet from the enzyme. This is S-adenosylmethionine synthase from Colwellia psychrerythraea (strain 34H / ATCC BAA-681) (Vibrio psychroerythus).